The primary structure comprises 158 residues: uncharacterized protein (158 aa).

The HTH asnC-type domain occupies 12–73; it reads LDEIDRAILR…LINPFKAGYE (62 aa). The segment at residues 31–50 is a DNA-binding region (H-T-H motif); it reads YSEISRRINVPESTVRARVN.

This is an uncharacterized protein from Pyrococcus horikoshii (strain ATCC 700860 / DSM 12428 / JCM 9974 / NBRC 100139 / OT-3).